The following is a 385-amino-acid chain: Hsp70/Hsp90 co-chaperone CNS1 (385 aa).

The interval 1–37 is disordered; the sequence is MSSVNANGGYTKPQKYVPGPGDPELPPQLSEFKDKTS. TPR repeat units follow at residues 83–116, 121–154, and 155–189; these read AENF…ECED, ESLY…NPKN, and VKCY…DPEN.

Belongs to the TTC4 family. As to quaternary structure, monomer. Component of Hsp70 and Hsp90 chaperone complexes. Interacts (via TPR repeats) with HSC82 and HSP82 (via C-terminal MEEVD pentapeptide). Interacts with CPR7, SSA1 and SPI1.

It is found in the cytoplasm. Co-chaperone that binds to the molecular chaperones Hsp90 (HSC82 and HSP82) and Hsp70 (SSA1). Stimulates SSA1 ATPase activity, but not Hsp90 ATPase activity. Involved in only a subset of Hsp90 functions. The protein is Hsp70/Hsp90 co-chaperone CNS1 (CNS1) of Saccharomyces cerevisiae (strain ATCC 204508 / S288c) (Baker's yeast).